The chain runs to 948 residues: Valine--tRNA ligase (948 aa).

The short motif at 40–50 (PNVTGSLHMGH) is the 'HIGH' region element. The 'KMSKS' region motif lies at 551–555 (KMSKS). Lys554 contacts ATP. Residues 879–945 (LIDKGAELAR…GKLAEQHARI (67 aa)) adopt a coiled-coil conformation.

The protein belongs to the class-I aminoacyl-tRNA synthetase family. ValS type 1 subfamily. In terms of assembly, monomer.

It is found in the cytoplasm. The enzyme catalyses tRNA(Val) + L-valine + ATP = L-valyl-tRNA(Val) + AMP + diphosphate. Catalyzes the attachment of valine to tRNA(Val). As ValRS can inadvertently accommodate and process structurally similar amino acids such as threonine, to avoid such errors, it has a 'posttransfer' editing activity that hydrolyzes mischarged Thr-tRNA(Val) in a tRNA-dependent manner. This Pseudomonas savastanoi pv. phaseolicola (strain 1448A / Race 6) (Pseudomonas syringae pv. phaseolicola (strain 1448A / Race 6)) protein is Valine--tRNA ligase.